A 196-amino-acid polypeptide reads, in one-letter code: Interleukin-23 subunit alpha (196 aa).

Positions methionine 1 to alanine 21 are cleaved as a signal peptide.

It belongs to the IL-6 superfamily. Heterodimer with IL12B; disulfide-linked. The heterodimer is known as interleukin IL-23. Interacts with IL23R; this interaction enables recruitment of IL12RB1. In terms of tissue distribution, secreted by activated dendritic cells (at protein level). Detected in various tissues with higher expression in polarized Th1 cells and activated macrophages.

It localises to the secreted. Functionally, associates with IL12B to form the IL-23 interleukin, a heterodimeric cytokine which functions in innate and adaptive immunity. IL-23 may constitute with IL-17 an acute response to infection in peripheral tissues. IL-23 binds to a heterodimeric receptor complex composed of IL12RB1 and IL23R, activates the Jak-Stat signaling cascade, stimulates memory rather than naive T-cells and promotes production of pro-inflammatory cytokines. IL-23 induces autoimmune inflammation and thus may be responsible for autoimmune inflammatory diseases and may be important for tumorigenesis. Associates with IL12B to form the pro-inflammatory cytokine IL-23 that plays different roles in innate and adaptive immunity. Released by antigen-presenting cells such as dendritic cells or macrophages, binds to a heterodimeric receptor complex composed of IL12RB1 and IL23R to activate JAK2 and TYK2 which then phosphorylate the receptor to form a docking site leading to the phosphorylation of STAT3 and STAT4. This process leads to activation of several pathways including p38 MAPK or NF-kappa-B and promotes the production of pro-inflammatory cytokines such as interleukin-17A/IL17A. In turn, participates in the early and effective intracellular bacterial clearance. Promotes the expansion and survival of T-helper 17 cells, a CD4-positive helper T-cell subset that produces IL-17, as well as other IL-17-producing cells. In Mus musculus (Mouse), this protein is Interleukin-23 subunit alpha (Il23a).